The sequence spans 459 residues: Ribulose bisphosphate carboxylase (459 aa).

Asparagine 111 lines the substrate pocket. Lysine 166 functions as the Proton acceptor in the catalytic mechanism. A substrate-binding site is contributed by lysine 168. Residues lysine 191, aspartate 193, and glutamate 194 each contribute to the Mg(2+) site. N6-carboxylysine is present on lysine 191. The Proton acceptor role is filled by histidine 287. Residues arginine 288, histidine 321, and serine 368 each coordinate substrate.

It belongs to the RuBisCO large chain family. Type II subfamily. As to quaternary structure, homodimer. Requires Mg(2+) as cofactor.

It carries out the reaction 2 (2R)-3-phosphoglycerate + 2 H(+) = D-ribulose 1,5-bisphosphate + CO2 + H2O. The enzyme catalyses D-ribulose 1,5-bisphosphate + O2 = 2-phosphoglycolate + (2R)-3-phosphoglycerate + 2 H(+). Functionally, ruBisCO catalyzes two reactions: the carboxylation of D-ribulose 1,5-bisphosphate, the primary event in carbon dioxide fixation, as well as the oxidative fragmentation of the pentose substrate. Both reactions occur simultaneously and in competition at the same active site. The protein is Ribulose bisphosphate carboxylase of Albidiferax ferrireducens (strain ATCC BAA-621 / DSM 15236 / T118) (Rhodoferax ferrireducens).